We begin with the raw amino-acid sequence, 464 residues long: L-cysteine desulfhydrase-like protein lolT2 (464 aa).

Lys-227 carries the post-translational modification N6-(pyridoxal phosphate)lysine.

The protein belongs to the class-V pyridoxal-phosphate-dependent aminotransferase family. Pyridoxal 5'-phosphate is required as a cofactor.

The protein operates within alkaloid biosynthesis. In terms of biological role, L-cysteine desulfhydrase-like protein; part of the gene cluster that mediates the biosynthesis of loline alkaloids, potent insecticidal agents composed of a pyrrolizidine ring system and an uncommon ether bridge linking carbons 2 and 7. Lolines are structurally differentiated by the various modifications of the L-amino group and include norloline, loline, N-methylloline, N-acetylloline, N-acetylnorloline, and N-formylloline. The first committed step is the condensation of O-acetyl-L-homoserine (derived from L-aspartic acid) and L-proline, probably catalyzed by the gamma-type pyridoxal 5'-phosphate(PLP)-dependent enzyme lolC, to give the diamino diacid, NACPP. Ensuing cyclization, decarboxylation, and acetylation steps yield 1-exo-acetamidopyrrolizidine (AcAP). LolO is required for installation of the ether bridge upon the pathway intermediate, 1-exo-acetamidopyrrolizidine (AcAP). In sequential 2-oxoglutarate- and O(2)-consuming steps, lolO removes hydrogens from C2 and C7 of AcAP to form both carbon-oxygen bonds in N-acetylnorloline (NANL), the precursor to all other lolines. The enzymes lolD, lolE, lolF and lolT have also been proposed to be involved in the ether-bridge installation. Further processing of the exocyclic moiety of NANL by fungal N-acetamidase (LolN), methyltransferase (LolM), and cytochrome P450 (LolP) enzymes, with occasional involvement of a plant acetyltransferase, generates the other known lolines. LolN transforms NANL to norlonine which is monomethylated and dimethylated to respectively lonine and N-methyllonine (NML) by lolM. LolP catalyzes hydroxylation of the methyl group in N-methylloline (NML) and further oxygenation to N-formylloline (NFL). A plant acetyltransferase is responsible for the acetylation of loline to form N-acetylloline (NAL). LolA might interact with aspartate kinase to prevent feedback inhibition of its activity by these end products and thereby promote production of L-homoserine from L-aspartate. The chain is L-cysteine desulfhydrase-like protein lolT2 from Epichloe uncinata (Endophyte fungus).